Consider the following 72-residue polypeptide: Conotoxin VnMKLT2-0221 (72 aa).

Positions 1–22 are cleaved as a signal peptide; sequence MKLTCVLIVAVLFLTACQLTTA. Positions 23-45 are excised as a propeptide; it reads ASYARSERQHPDLGSSDQNSKLT. The interval 26–45 is disordered; that stretch reads ARSERQHPDLGSSDQNSKLT. 3 disulfides stabilise this stretch: Cys-48–Cys-62, Cys-55–Cys-66, and Cys-61–Cys-71.

Belongs to the conotoxin O1 superfamily. Expressed by the venom duct.

It is found in the secreted. The polypeptide is Conotoxin VnMKLT2-0221 (Conus ventricosus (Mediterranean cone)).